The chain runs to 545 residues: Chaperonin GroEL 2 (545 aa).

Residues 29 to 32 (TLGP), 86 to 90 (DGTTT), G413, 479 to 481 (NAA), and D495 contribute to the ATP site.

Belongs to the chaperonin (HSP60) family. In terms of assembly, forms a cylinder of 14 subunits composed of two heptameric rings stacked back-to-back. Interacts with the co-chaperonin GroES.

Its subcellular location is the cytoplasm. It carries out the reaction ATP + H2O + a folded polypeptide = ADP + phosphate + an unfolded polypeptide.. Its function is as follows. Together with its co-chaperonin GroES, plays an essential role in assisting protein folding. The GroEL-GroES system forms a nano-cage that allows encapsulation of the non-native substrate proteins and provides a physical environment optimized to promote and accelerate protein folding. The protein is Chaperonin GroEL 2 of Prochlorococcus marinus (strain SARG / CCMP1375 / SS120).